Reading from the N-terminus, the 65-residue chain is Toxin Cbo5 (65 aa).

The LCN-type CS-alpha/beta domain occupies 2-65 (KDGYLVDKTG…QTWPLPNKSC (64 aa)). 4 disulfides stabilise this stretch: cysteine 12–cysteine 65, cysteine 16–cysteine 41, cysteine 25–cysteine 46, and cysteine 29–cysteine 48.

This sequence belongs to the long (4 C-C) scorpion toxin superfamily. Sodium channel inhibitor family. Beta subfamily. In terms of tissue distribution, expressed by the venom gland.

The protein localises to the secreted. Functionally, a probable toxin that has no activity on the tested sodium channels (when tested at 200 nM) and is not toxic to mice, crickets or sweet water shrimps. It resembles Beta toxins that bind voltage-independently at site-4 of sodium channels and shift the voltage of activation toward more negative potentials, thereby affecting sodium channel activation and promoting spontaneous and repetitive firing. This is Toxin Cbo5 from Centruroides bonito (Scorpion).